The sequence spans 158 residues: 18.2 kDa class I heat shock protein (158 aa).

Residues 44 to 158 (ENSAFVSTRV…PEVKTIDISG (115 aa)) enclose the sHSP domain.

This sequence belongs to the small heat shock protein (HSP20) family. As to quaternary structure, forms oligomeric structures.

The protein localises to the cytoplasm. The protein is 18.2 kDa class I heat shock protein (HSP18.2) of Medicago sativa (Alfalfa).